A 449-amino-acid chain; its full sequence is Exodeoxyribonuclease 7 large subunit (449 aa).

Belongs to the XseA family. Heterooligomer composed of large and small subunits.

It is found in the cytoplasm. The catalysed reaction is Exonucleolytic cleavage in either 5'- to 3'- or 3'- to 5'-direction to yield nucleoside 5'-phosphates.. In terms of biological role, bidirectionally degrades single-stranded DNA into large acid-insoluble oligonucleotides, which are then degraded further into small acid-soluble oligonucleotides. The polypeptide is Exodeoxyribonuclease 7 large subunit (Salmonella typhimurium (strain LT2 / SGSC1412 / ATCC 700720)).